A 776-amino-acid polypeptide reads, in one-letter code: Protein FAM83C (776 aa).

The tract at residues 1 to 340 is DUF1669; the sequence is MQGCQAGASI…LYAESQPVEG (340 aa). Disordered stretches follow at residues 344–467, 494–565, 617–653, 669–694, and 716–745; these read NEDP…STSP, SRLP…SLQH, HGQL…DDRR, PFRS…VGSA, and QGAR…LFAP. The segment covering 368–385 has biased composition (low complexity); that stretch reads SATGSSPSSNSLSSIKHS. The span at 452–467 shows a compositional bias: polar residues; that stretch reads PWSQSSPALNHSSTSP. Positions 523-539 are enriched in basic and acidic residues; it reads VEEKKVSLSQSHDHLDR. The segment covering 554 to 563 has biased composition (polar residues); the sequence is SRVTPDSSSL.

The protein belongs to the FAM83 family. Directly interacts (via DUF1669) with CSNK1A1 and CSNK1A1L. May interact with RAF1. In terms of processing, phosphorylated by CSNK1A1.

Its subcellular location is the cytoplasm. Functionally, may play a role in MAPK signaling. The chain is Protein FAM83C from Mus musculus (Mouse).